The sequence spans 330 residues: DNA-directed RNA polymerase subunit alpha (330 aa).

Residues 1-236 are alpha N-terminal domain (alpha-NTD); sequence MQGSVTEFLK…EQLDAFVDLR (236 aa). Positions 250–330 are alpha C-terminal domain (alpha-CTD); it reads FDPILLRPVD…NWPPASIAED (81 aa).

It belongs to the RNA polymerase alpha chain family. In terms of assembly, homodimer. The RNAP catalytic core consists of 2 alpha, 1 beta, 1 beta' and 1 omega subunit. When a sigma factor is associated with the core the holoenzyme is formed, which can initiate transcription.

The catalysed reaction is RNA(n) + a ribonucleoside 5'-triphosphate = RNA(n+1) + diphosphate. In terms of biological role, DNA-dependent RNA polymerase catalyzes the transcription of DNA into RNA using the four ribonucleoside triphosphates as substrates. The protein is DNA-directed RNA polymerase subunit alpha of Vibrio cholerae serotype O1 (strain ATCC 39315 / El Tor Inaba N16961).